The chain runs to 430 residues: Adenylosuccinate synthetase (430 aa).

GTP is bound by residues Gly-12–Lys-18 and Gly-40–Thr-42. The active-site Proton acceptor is the Asp-13. Mg(2+) is bound by residues Asp-13 and Gly-40. IMP-binding positions include Asp-13 to Lys-16, Asn-38 to His-41, Thr-128, Arg-142, Gln-223, Thr-238, and Arg-302. His-41 acts as the Proton donor in catalysis. Residue Thr-298–Arg-304 participates in substrate binding. GTP is bound by residues Arg-304, Leu-330–Asp-332, and Ser-412–Gly-414.

Belongs to the adenylosuccinate synthetase family. In terms of assembly, homodimer. The cofactor is Mg(2+).

The protein localises to the cytoplasm. The catalysed reaction is IMP + L-aspartate + GTP = N(6)-(1,2-dicarboxyethyl)-AMP + GDP + phosphate + 2 H(+). It functions in the pathway purine metabolism; AMP biosynthesis via de novo pathway; AMP from IMP: step 1/2. Plays an important role in the de novo pathway of purine nucleotide biosynthesis. Catalyzes the first committed step in the biosynthesis of AMP from IMP. The protein is Adenylosuccinate synthetase of Listeria monocytogenes serotype 4a (strain HCC23).